A 923-amino-acid polypeptide reads, in one-letter code: Periplasmic nitrate reductase (923 aa).

The tat-type signal signal peptide spans 1-30 (MNRRDFIKNTAIASAASVAGLSVPSSMLGA). The 4Fe-4S Mo/W bis-MGD-type domain occupies 34 to 90 (WKWDKAVCRFCGTGCGIMIARKDGKIVATKGDPAAPVNRGLNCIKGYFNAKIMYGED). Residues cysteine 41, cysteine 44, cysteine 48, and cysteine 76 each coordinate [4Fe-4S] cluster. Mo-bis(molybdopterin guanine dinucleotide) contacts are provided by residues lysine 78, glutamine 146, asparagine 171, cysteine 175, 208 to 215 (WGANMAEM), methionine 416, glutamine 420, asparagine 526, 551 to 552 (SD), lysine 574, aspartate 601, and 813 to 822 (TGRVLEHWHS). A substrate-binding site is contributed by tryptophan 889. 2 residues coordinate Mo-bis(molybdopterin guanine dinucleotide): asparagine 897 and lysine 914.

The protein belongs to the prokaryotic molybdopterin-containing oxidoreductase family. NasA/NapA/NarB subfamily. In terms of assembly, component of the periplasmic nitrate reductase NapAB complex composed of NapA and NapB. [4Fe-4S] cluster is required as a cofactor. Requires Mo-bis(molybdopterin guanine dinucleotide) as cofactor. In terms of processing, predicted to be exported by the Tat system. The position of the signal peptide cleavage has not been experimentally proven.

The protein resides in the periplasm. The enzyme catalyses 2 Fe(II)-[cytochrome] + nitrate + 2 H(+) = 2 Fe(III)-[cytochrome] + nitrite + H2O. Catalytic subunit of the periplasmic nitrate reductase complex NapAB. Receives electrons from NapB and catalyzes the reduction of nitrate to nitrite. The sequence is that of Periplasmic nitrate reductase from Campylobacter jejuni subsp. jejuni serotype O:23/36 (strain 81-176).